A 452-amino-acid polypeptide reads, in one-letter code: Scaffold protein ILK (452 aa).

ANK repeat units lie at residues 2–30, 31–63, 64–96, 97–129, and 130–174; these read DDIF…LNQG, DDHG…INVM, NRGD…INAV, NEHG…VSIA, and NKYS…GTTR. The 254-residue stretch at 193–446 folds into the Protein kinase domain; the sequence is LSLSQKLNEN…PKFDMIVPIL (254 aa). Residues Asn200, Asn202, Ser204, His270, Met272, and Asn279 each coordinate ATP. Position 339 (Asp339) interacts with Mg(2+). Position 341 (Lys341) interacts with ATP. A Nuclear localization signal motif is present at residues 363–371; that stretch reads KKPEEINRR.

It belongs to the protein kinase superfamily. TKL Ser/Thr protein kinase family. In terms of assembly, interacts with PXN/PAXILLIN (via LD motif 4).

The protein resides in the cell junction. It is found in the focal adhesion. Its subcellular location is the cell membrane. It localises to the cell projection. The protein localises to the lamellipodium. The protein resides in the cytoplasm. It is found in the myofibril. Its subcellular location is the sarcomere. It localises to the nucleus. The protein localises to the cytoskeleton. The protein resides in the microtubule organizing center. It is found in the centrosome. Its subcellular location is the cell cortex. Scaffold protein which mediates protein-protein interactions during a range of cellular events including focal adhesion assembly, cell adhesion and cell migration. The sequence is that of Scaffold protein ILK from Gallus gallus (Chicken).